Here is a 154-residue protein sequence, read N- to C-terminus: Transcription antitermination protein NusB (154 aa).

This sequence belongs to the NusB family.

Its function is as follows. Involved in transcription antitermination. Required for transcription of ribosomal RNA (rRNA) genes. Binds specifically to the boxA antiterminator sequence of the ribosomal RNA (rrn) operons. The protein is Transcription antitermination protein NusB of Desulfosudis oleivorans (strain DSM 6200 / JCM 39069 / Hxd3) (Desulfococcus oleovorans).